A 572-amino-acid chain; its full sequence is Proline--tRNA ligase (572 aa).

The protein belongs to the class-II aminoacyl-tRNA synthetase family. ProS type 1 subfamily. As to quaternary structure, homodimer.

It localises to the cytoplasm. It carries out the reaction tRNA(Pro) + L-proline + ATP = L-prolyl-tRNA(Pro) + AMP + diphosphate. Catalyzes the attachment of proline to tRNA(Pro) in a two-step reaction: proline is first activated by ATP to form Pro-AMP and then transferred to the acceptor end of tRNA(Pro). As ProRS can inadvertently accommodate and process non-cognate amino acids such as alanine and cysteine, to avoid such errors it has two additional distinct editing activities against alanine. One activity is designated as 'pretransfer' editing and involves the tRNA(Pro)-independent hydrolysis of activated Ala-AMP. The other activity is designated 'posttransfer' editing and involves deacylation of mischarged Ala-tRNA(Pro). The misacylated Cys-tRNA(Pro) is not edited by ProRS. The protein is Proline--tRNA ligase of Escherichia coli (strain K12 / MC4100 / BW2952).